Consider the following 329-residue polypeptide: Putative glucose ABC transporter permease protein TsgC13 (329 aa).

7 helical membrane-spanning segments follow: residues Phe-3–Leu-23, Gly-32–Val-52, Trp-60–Leu-80, Val-89–Gly-109, Ala-139–Leu-161, Leu-193–Phe-213, and Leu-216–Ala-236.

Belongs to the binding-protein-dependent transport system permease family. As to quaternary structure, the complex is composed of two ATP-binding proteins (TsgD13), two transmembrane proteins (TsgB13 and TsgC13) and a solute-binding protein (TsgA13).

Its subcellular location is the cell membrane. In terms of biological role, part of an ABC transporter complex involved in glucose import (Potential). Responsible for the translocation of the substrate across the membrane. The polypeptide is Putative glucose ABC transporter permease protein TsgC13 (tsgC13) (Haloferax volcanii (strain ATCC 29605 / DSM 3757 / JCM 8879 / NBRC 14742 / NCIMB 2012 / VKM B-1768 / DS2) (Halobacterium volcanii)).